The sequence spans 140 residues: Nucleoside diphosphate kinase (140 aa).

Lys10, Phe58, Arg86, Thr92, Arg103, and Asn113 together coordinate ATP. Catalysis depends on His116, which acts as the Pros-phosphohistidine intermediate.

It belongs to the NDK family. In terms of assembly, homotetramer. Mg(2+) is required as a cofactor.

The protein localises to the cytoplasm. The catalysed reaction is a 2'-deoxyribonucleoside 5'-diphosphate + ATP = a 2'-deoxyribonucleoside 5'-triphosphate + ADP. The enzyme catalyses a ribonucleoside 5'-diphosphate + ATP = a ribonucleoside 5'-triphosphate + ADP. Major role in the synthesis of nucleoside triphosphates other than ATP. The ATP gamma phosphate is transferred to the NDP beta phosphate via a ping-pong mechanism, using a phosphorylated active-site intermediate. This chain is Nucleoside diphosphate kinase, found in Haemophilus influenzae (strain PittEE).